The primary structure comprises 364 residues: tRNA-specific 2-thiouridylase MnmA (364 aa).

Residues 6 to 13 (AMSGGVDS) and L32 each bind ATP. Residue C101 is the Nucleophile of the active site. C101 and C193 are joined by a disulfide. ATP is bound at residue G125. The interval 143–145 (KDQ) is interaction with tRNA. Catalysis depends on C193, which acts as the Cysteine persulfide intermediate.

It belongs to the MnmA/TRMU family.

It localises to the cytoplasm. It carries out the reaction S-sulfanyl-L-cysteinyl-[protein] + uridine(34) in tRNA + AH2 + ATP = 2-thiouridine(34) in tRNA + L-cysteinyl-[protein] + A + AMP + diphosphate + H(+). Catalyzes the 2-thiolation of uridine at the wobble position (U34) of tRNA, leading to the formation of s(2)U34. The chain is tRNA-specific 2-thiouridylase MnmA from Rhodococcus jostii (strain RHA1).